Reading from the N-terminus, the 984-residue chain is Respiratory nitrate reductase subunit alpha (984 aa).

A disordered region spans residues 1–43; sequence MSRNDASQLDDGETTAESPPDDQANDAPEVGDPPGDPVDADSG. The segment covering 8–24 has biased composition (acidic residues); the sequence is QLDDGETTAESPPDDQA. The region spanning 103 to 167 is the 4Fe-4S Mo/W bis-MGD-type domain; sequence DSVSRSTHSV…CYTDYVNADQ (65 aa). 4 residues coordinate [4Fe-4S] cluster: His110, Cys114, Cys118, and Cys153. Position 249 (Asp249) interacts with Mo-bis(molybdopterin guanine dinucleotide).

Belongs to the prokaryotic molybdopterin-containing oxidoreductase family. In terms of assembly, probable multiprotein complex; a catalytic heterodimer of an alpha and beta chain is proposed to associate with additional subunits involved in membrane attachment and electron transfer. Requires [4Fe-4S] cluster as cofactor. The cofactor is Mo-bis(molybdopterin guanine dinucleotide). Exported by the Tat system.

The protein resides in the cell membrane. It catalyses the reaction nitrate + a quinol = a quinone + nitrite + H2O. With respect to regulation, inhibited by cyanide, azide and antimycin A. Enzyme stability is not dependent on salt concentration. In terms of biological role, the respiratory membrane-bound nitrate reductase enzyme complex plays a role in generation of metabolic energy by using nitrate as a terminal electron acceptor during anaerobic conditions. The alpha chain is the actual site of nitrate reduction. This chain is Respiratory nitrate reductase subunit alpha (narG), found in Haloferax mediterranei (strain ATCC 33500 / DSM 1411 / JCM 8866 / NBRC 14739 / NCIMB 2177 / R-4) (Halobacterium mediterranei).